A 724-amino-acid chain; its full sequence is Catalase-peroxidase (724 aa).

The tract at residues 1–26 is disordered; it reads MDENKTKPTGKCPVMHGGNTSTGSSN. Positions 98–225 form a cross-link, tryptophyl-tyrosyl-methioninium (Trp-Tyr) (with M-251); sequence WHSAGSYRTT…LAAVQMGLIY (128 aa). His-99 functions as the Proton acceptor in the catalytic mechanism. Positions 225-251 form a cross-link, tryptophyl-tyrosyl-methioninium (Tyr-Met) (with W-98); sequence YVNPEGVDGKSDPLRTAQDMRVTFSRM. Position 266 (His-266) interacts with heme b.

It belongs to the peroxidase family. Peroxidase/catalase subfamily. Homodimer or homotetramer. The cofactor is heme b. Post-translationally, formation of the three residue Trp-Tyr-Met cross-link is important for the catalase, but not the peroxidase activity of the enzyme.

The enzyme catalyses H2O2 + AH2 = A + 2 H2O. It catalyses the reaction 2 H2O2 = O2 + 2 H2O. In terms of biological role, bifunctional enzyme with both catalase and broad-spectrum peroxidase activity. The polypeptide is Catalase-peroxidase (Pectobacterium atrosepticum (strain SCRI 1043 / ATCC BAA-672) (Erwinia carotovora subsp. atroseptica)).